Consider the following 303-residue polypeptide: Cysteine synthase B (303 aa).

N6-(pyridoxal phosphate)lysine is present on Lys-41. Pyridoxal 5'-phosphate contacts are provided by residues Asn-71, 174-178, and Ser-255; that span reads GTTGT.

This sequence belongs to the cysteine synthase/cystathionine beta-synthase family. Homodimer. The cofactor is pyridoxal 5'-phosphate.

The catalysed reaction is O-acetyl-L-serine + hydrogen sulfide = L-cysteine + acetate. It participates in amino-acid biosynthesis; L-cysteine biosynthesis; L-cysteine from L-serine: step 2/2. Two cysteine synthase enzymes are found. Both catalyze the same reaction. Cysteine synthase B can also use thiosulfate in place of sulfide to give cysteine thiosulfonate as a product. The protein is Cysteine synthase B (cysM) of Escherichia coli (strain K12).